The following is a 328-amino-acid chain: Tetraacyldisaccharide 4'-kinase (328 aa).

55–62 (TAGGNGKT) contributes to the ATP binding site.

This sequence belongs to the LpxK family.

It catalyses the reaction a lipid A disaccharide + ATP = a lipid IVA + ADP + H(+). The protein operates within glycolipid biosynthesis; lipid IV(A) biosynthesis; lipid IV(A) from (3R)-3-hydroxytetradecanoyl-[acyl-carrier-protein] and UDP-N-acetyl-alpha-D-glucosamine: step 6/6. Its function is as follows. Transfers the gamma-phosphate of ATP to the 4'-position of a tetraacyldisaccharide 1-phosphate intermediate (termed DS-1-P) to form tetraacyldisaccharide 1,4'-bis-phosphate (lipid IVA). This Yersinia pseudotuberculosis serotype I (strain IP32953) protein is Tetraacyldisaccharide 4'-kinase.